Reading from the N-terminus, the 278-residue chain is Alcohol dehydrogenase-related 31 kDa protein (278 aa).

11–34 (YVADCGGIALETSKVLMTKNIAKL) is an NAD(+) binding site. Substrate is bound at residue serine 139. Tyrosine 152 functions as the Proton acceptor in the catalytic mechanism.

The protein belongs to the short-chain dehydrogenases/reductases (SDR) family.

The protein is Alcohol dehydrogenase-related 31 kDa protein (Adhr) of Drosophila pseudoobscura pseudoobscura (Fruit fly).